The following is a 337-amino-acid chain: HTH-type transcriptional repressor PurR (337 aa).

Residues 2-56 (ATIKDVAKLAAVSTTTVSHVINKTRFVAEATQKRVWEAVEELNYAPSAVARSLKC) enclose the HTH lacI-type domain. A DNA-binding region (H-T-H motif) is located at residues 4–23 (IKDVAKLAAVSTTTVSHVIN). A DNA-binding region spans residues 48 to 56 (SAVARSLKC). Residues phenylalanine 73, lysine 189, threonine 191, phenylalanine 220, and aspartate 276 each contribute to the hypoxanthine site.

In terms of assembly, homodimer.

Its pathway is purine metabolism; purine nucleotide biosynthesis [regulation]. In terms of biological role, is the main repressor of the genes involved in the de novo synthesis of purine nucleotides, regulating purB, purC, purEK, purF, purHD, purL, purMN and guaBA expression. PurR is allosterically activated to bind its cognate DNA by binding the purine corepressors, hypoxanthine or guanine, thereby effecting transcription repression. In Aliivibrio fischeri (strain MJ11) (Vibrio fischeri), this protein is HTH-type transcriptional repressor PurR.